A 249-amino-acid polypeptide reads, in one-letter code: 2,3-bisphosphoglycerate-dependent phosphoglycerate mutase (249 aa).

Residues 8-15 (RHGESTWN), 21-22 (TG), Arg60, 87-90 (ERHY), Lys98, 114-115 (RR), and 183-184 (GN) each bind substrate. His9 (tele-phosphohistidine intermediate) is an active-site residue. The active-site Proton donor/acceptor is the Glu87.

This sequence belongs to the phosphoglycerate mutase family. BPG-dependent PGAM subfamily. Homodimer.

The enzyme catalyses (2R)-2-phosphoglycerate = (2R)-3-phosphoglycerate. It functions in the pathway carbohydrate degradation; glycolysis; pyruvate from D-glyceraldehyde 3-phosphate: step 3/5. Its function is as follows. Catalyzes the interconversion of 2-phosphoglycerate and 3-phosphoglycerate. The sequence is that of 2,3-bisphosphoglycerate-dependent phosphoglycerate mutase from Aromatoleum aromaticum (strain DSM 19018 / LMG 30748 / EbN1) (Azoarcus sp. (strain EbN1)).